A 363-amino-acid polypeptide reads, in one-letter code: UDP-N-acetylglucosamine--N-acetylmuramyl-(pentapeptide) pyrophosphoryl-undecaprenol N-acetylglucosamine transferase (363 aa).

UDP-N-acetyl-alpha-D-glucosamine contacts are provided by residues 16 to 18 (TGG), N128, R167, S195, I249, 268 to 273 (ALTVSE), and Q294.

It belongs to the glycosyltransferase 28 family. MurG subfamily.

The protein localises to the cell inner membrane. The enzyme catalyses di-trans,octa-cis-undecaprenyl diphospho-N-acetyl-alpha-D-muramoyl-L-alanyl-D-glutamyl-meso-2,6-diaminopimeloyl-D-alanyl-D-alanine + UDP-N-acetyl-alpha-D-glucosamine = di-trans,octa-cis-undecaprenyl diphospho-[N-acetyl-alpha-D-glucosaminyl-(1-&gt;4)]-N-acetyl-alpha-D-muramoyl-L-alanyl-D-glutamyl-meso-2,6-diaminopimeloyl-D-alanyl-D-alanine + UDP + H(+). It functions in the pathway cell wall biogenesis; peptidoglycan biosynthesis. In terms of biological role, cell wall formation. Catalyzes the transfer of a GlcNAc subunit on undecaprenyl-pyrophosphoryl-MurNAc-pentapeptide (lipid intermediate I) to form undecaprenyl-pyrophosphoryl-MurNAc-(pentapeptide)GlcNAc (lipid intermediate II). The protein is UDP-N-acetylglucosamine--N-acetylmuramyl-(pentapeptide) pyrophosphoryl-undecaprenol N-acetylglucosamine transferase of Marinobacter nauticus (strain ATCC 700491 / DSM 11845 / VT8) (Marinobacter aquaeolei).